The following is a 117-amino-acid chain: Swarming motility protein SwrAA (117 aa).

It localises to the cytoplasm. In terms of biological role, required for swarm cell differentiation. Plays a crucial role in regulating the degree of cell flagellation. The polypeptide is Swarming motility protein SwrAA (swrAA) (Bacillus subtilis (strain 168)).